We begin with the raw amino-acid sequence, 577 residues long: MRMKQLYAPTLKETPSDVETVSHEYLLRGGFIRKVAAGIYTYLPLGRRVLLKIENIVREEMNRIGAQEILMPILQPAELWKRSGRWDDYGPEMMKLKDRHERDFTLGPTHEEIVTDLVKNELRSYRQLPLVVYQVANKYRDEIRPRFGLLRAREFIMKDAYSFHSSWESLDETYELFKEAYSRIMERLGVKYMVIEAETGAIGGNASHEFVVPAKIGETNVLYCEKCGYQASDEKAEYRGEYPVEEEEEKPLEKVPTPGVRTIEEVSQFLGVPPSKIVKSLLFVGRDGYVMALIRGDLELNEAKLKSHLKDQSLRLATPEEVLKDFGVPIGFIGPIGTNVKKVADHSIKGLKNFVVGGMEKDTHYVNANHPRDFKVDEWCDLRTVVEGDPCPVCGEPLRATKGIELGHIFKLGTKYSEAMEAYFMDENGEMKPFIMGCYGWGVSRTMAAVVEHFHDENGMIWPLSIAPYTVIVDILNMNDPDQKRVGEEIYRALLEKGEEVVLDDREVSPGFKFKDADLIGFPIRINVGRSLKDGVIELKKRYSKELVKVSIQNGLGSLFEALNRMKAEYDPREAIE.

This sequence belongs to the class-II aminoacyl-tRNA synthetase family. ProS type 1 subfamily. In terms of assembly, homodimer.

It localises to the cytoplasm. It carries out the reaction tRNA(Pro) + L-proline + ATP = L-prolyl-tRNA(Pro) + AMP + diphosphate. Its function is as follows. Catalyzes the attachment of proline to tRNA(Pro) in a two-step reaction: proline is first activated by ATP to form Pro-AMP and then transferred to the acceptor end of tRNA(Pro). As ProRS can inadvertently accommodate and process non-cognate amino acids such as alanine and cysteine, to avoid such errors it has two additional distinct editing activities against alanine. One activity is designated as 'pretransfer' editing and involves the tRNA(Pro)-independent hydrolysis of activated Ala-AMP. The other activity is designated 'posttransfer' editing and involves deacylation of mischarged Ala-tRNA(Pro). The misacylated Cys-tRNA(Pro) is not edited by ProRS. The sequence is that of Proline--tRNA ligase from Thermotoga neapolitana (strain ATCC 49049 / DSM 4359 / NBRC 107923 / NS-E).